The following is a 550-amino-acid chain: Methyl-coenzyme M reductase subunit alpha (550 aa).

Gln-147 is a coenzyme F430 binding site. Residues Arg-225, 256-257 (KH), and Arg-270 contribute to the coenzyme B site. His-257 carries the pros-methylhistidine modification. At Arg-271 the chain carries 5-methylarginine. Tyr-333 lines the coenzyme M pocket. Gln-400 is subject to 2-methylglutamine. Tyr-444 is a coenzyme M binding site. At Gly-445 the chain carries 1-thioglycine. Asp-450 carries the (Z)-2,3-didehydroaspartate modification. The residue at position 452 (Cys-452) is an S-methylcysteine.

The protein belongs to the methyl-coenzyme M reductase alpha subunit family. MCR is a hexamer of two alpha, two beta, and two gamma chains, forming a dimer of heterotrimers. It depends on coenzyme F430 as a cofactor. In terms of processing, the alpha subunit contains six modified amino acids near the active site region. Is methylated on His-257, Arg-271, Gln-400 and Cys-452, probably by the action of specific S-adenosylmethionine-dependent methyltransferases. Also contains a thioglycine at position 445, forming a thiopeptide bond. Contains a didehydroaspartate residue at position 450. The methylation on C5 of Arg-271 is a post-translational methylation not essential in vivo, but which plays a role for the stability and structural integrity of MCR.

It localises to the cytoplasm. The enzyme catalyses coenzyme B + methyl-coenzyme M = methane + coenzyme M-coenzyme B heterodisulfide. The protein operates within one-carbon metabolism; methyl-coenzyme M reduction; methane from methyl-coenzyme M: step 1/1. Component of the methyl-coenzyme M reductase (MCR) I that catalyzes the reductive cleavage of methyl-coenzyme M (CoM-S-CH3 or 2-(methylthio)ethanesulfonate) using coenzyme B (CoB or 7-mercaptoheptanoylthreonine phosphate) as reductant which results in the production of methane and the mixed heterodisulfide of CoB and CoM (CoM-S-S-CoB). This is the final step in methanogenesis. The sequence is that of Methyl-coenzyme M reductase subunit alpha (mcrA) from Methanothermobacter thermautotrophicus (strain ATCC 29096 / DSM 1053 / JCM 10044 / NBRC 100330 / Delta H) (Methanobacterium thermoautotrophicum).